A 241-amino-acid polypeptide reads, in one-letter code: Adapter protein MecA (241 aa).

The disordered stretch occupies residues 77–102 (KNTDEDDVADESQGDASVDSEHPDQV). Residues 80–89 (DEDDVADESQ) show a composition bias toward acidic residues.

The protein belongs to the MecA family. As to quaternary structure, homodimer.

Enables the recognition and targeting of unfolded and aggregated proteins to the ClpC protease or to other proteins involved in proteolysis. The chain is Adapter protein MecA from Levilactobacillus brevis (strain ATCC 367 / BCRC 12310 / CIP 105137 / JCM 1170 / LMG 11437 / NCIMB 947 / NCTC 947) (Lactobacillus brevis).